Consider the following 509-residue polypeptide: Lanosterol 14-alpha demethylase (509 aa).

A helical transmembrane segment spans residues 30 to 50 (GNLLSMLLIACAFTLSLVYLI). A heme-binding site is contributed by Cys455.

It belongs to the cytochrome P450 family. Heme serves as cofactor. Post-translationally, ubiquitinated by MARCHF6, leading to proteasomal degradation. As to expression, ubiquitously expressed with highest levels in testis, ovary, adrenal, prostate, liver, kidney and lung.

The protein resides in the endoplasmic reticulum membrane. It localises to the microsome membrane. The enzyme catalyses a 14alpha-methyl steroid + 3 reduced [NADPH--hemoprotein reductase] + 3 O2 = a Delta(14) steroid + formate + 3 oxidized [NADPH--hemoprotein reductase] + 4 H2O + 4 H(+). It carries out the reaction lanosterol + 3 reduced [NADPH--hemoprotein reductase] + 3 O2 = 4,4-dimethyl-5alpha-cholesta-8,14,24-trien-3beta-ol + formate + 3 oxidized [NADPH--hemoprotein reductase] + 4 H2O + 4 H(+). It catalyses the reaction 24,25-dihydrolanosterol + 3 reduced [NADPH--hemoprotein reductase] + 3 O2 = 4,4-dimethyl-8,14-cholestadien-3beta-ol + formate + 3 oxidized [NADPH--hemoprotein reductase] + 4 H2O + 4 H(+). The catalysed reaction is a 14alpha-methyl steroid + reduced [NADPH--hemoprotein reductase] + O2 = a 14alpha-hydroxymethyl steroid + oxidized [NADPH--hemoprotein reductase] + H2O + H(+). The enzyme catalyses a 14alpha-hydroxymethyl steroid + reduced [NADPH--hemoprotein reductase] + O2 = a 14alpha-formyl steroid + oxidized [NADPH--hemoprotein reductase] + 2 H2O + H(+). It carries out the reaction a 14alpha-formyl steroid + reduced [NADPH--hemoprotein reductase] + O2 = a Delta(14) steroid + formate + oxidized [NADPH--hemoprotein reductase] + H2O + 2 H(+). It catalyses the reaction lanosterol + reduced [NADPH--hemoprotein reductase] + O2 = 32-hydroxylanosterol + oxidized [NADPH--hemoprotein reductase] + H2O + H(+). The catalysed reaction is 32-hydroxylanosterol + reduced [NADPH--hemoprotein reductase] + O2 = 32-oxolanosterol + oxidized [NADPH--hemoprotein reductase] + 2 H2O + H(+). The enzyme catalyses 32-oxolanosterol + reduced [NADPH--hemoprotein reductase] + O2 = 4,4-dimethyl-5alpha-cholesta-8,14,24-trien-3beta-ol + formate + oxidized [NADPH--hemoprotein reductase] + H2O + 2 H(+). It carries out the reaction 24,25-dihydrolanosterol + reduced [NADPH--hemoprotein reductase] + O2 = 32-hydroxy-24,25-dihydrolanosterol + oxidized [NADPH--hemoprotein reductase] + H2O + H(+). It catalyses the reaction 32-hydroxy-24,25-dihydrolanosterol + reduced [NADPH--hemoprotein reductase] + O2 = 32-oxo-24,25-dihydrolanosterol + oxidized [NADPH--hemoprotein reductase] + 2 H2O + H(+). The catalysed reaction is 32-oxo-24,25-dihydrolanosterol + reduced [NADPH--hemoprotein reductase] + O2 = 4,4-dimethyl-8,14-cholestadien-3beta-ol + formate + oxidized [NADPH--hemoprotein reductase] + H2O + 2 H(+). It functions in the pathway steroid biosynthesis; zymosterol biosynthesis; zymosterol from lanosterol: step 1/6. With respect to regulation, inhibited by azalanstat. Inhibited by azole antifungal agents ketoconazole, itraconazole and fluconazole. Its function is as follows. Sterol 14alpha-demethylase that plays a critical role in the cholesterol biosynthesis pathway, being cholesterol the major sterol component in mammalian membranes as well as a precursor for bile acid and steroid hormone synthesis. Cytochrome P450 monooxygenase that catalyzes the three-step oxidative removal of the 14alpha-methyl group (C-32) of sterols such as lanosterol (lanosta-8,24-dien-3beta-ol) and 24,25-dihydrolanosterol (DHL) in the form of formate, and converts the sterols to 4,4-dimethyl-5alpha-cholesta-8,14,24-trien-3beta-ol and 4,4-dimethyl-8,14-cholestadien-3beta-ol, respectively, which are intermediates of cholesterol biosynthesis. Can also demethylate substrates not intrinsic to mammals, such as eburicol (24-methylene-24,25-dihydrolanosterol), but at a lower rate than DHL. This Homo sapiens (Human) protein is Lanosterol 14-alpha demethylase.